We begin with the raw amino-acid sequence, 72 residues long: Crustacean hyperglycemic hormone B (72 aa).

Pyrrolidone carboxylic acid is present on Gln-1. D-phenylalanine; in form CHHB-II is present on Phe-3. Intrachain disulfides connect Cys-7/Cys-43, Cys-23/Cys-39, and Cys-26/Cys-52. Val-72 carries the valine amide modification.

Post-translationally, stereoinversion of L-Phe (in CHHB-I) to D-Phe (in CHHB-II).

It is found in the secreted. In terms of biological role, hormone found in the sinus gland of isopods and decapods which controls the blood sugar level. Has a secretagogue action over the amylase released from the midgut gland. May act as a stress hormone and may be involved in the control of molting and reproduction. The polypeptide is Crustacean hyperglycemic hormone B (Cherax destructor (Common yabby crayfish)).